A 623-amino-acid polypeptide reads, in one-letter code: MPLPQPLLGGASPAPARAASSFLHPLLHTRHRVSTAPAAASSFVPASHSSHANDAMLLRRAADVADRSAGLTSPHPNFGCVIARPQLNTDSADSWVVGEGFLYAQGTPCAELLASQEAGEHARGGTAYLNLEPGDCFGDNTAVGSLVQAGITRVVVGLRHPLKHLRGKAIQALRNEGIQVDVVGEDLQSKLFKEALKSCLTVNAPLLYRAAFHVPFSVLKYAMTADGKIAASSGHASWISGKASRGRVFELRGRSDAVIVGGNTVRFDDPRLTARHVKGHVPVRIVMSQSLNLPEEANLWNLNDAYTIVATQRGARRDFQRKLAMKGVEVVEFDMLNPRAVMSYCYDRGYLAVLWECGGTLAASAISASVIHKVYAFWAPKIIGGLNAPTPVGELGMSQMTQAINLIDVSYEQIDRDMLMSGFIEPIPDLSPVIPSVEEIPSIDPEVSPYETNIISFYKTWDIFGAFSNFSPHSIQMPDENGDYFTWPTVEHYYQAHKFVGVDNPQARDIVQEIKLAKSPEEAARIGRTRQKGFPELVRTDWESTKIDVMYRAIKCKFSTYPHLTNMLLSTAGSVLVEASPHDLFWGGGREGEGLNYLGRLLMQLRSEILGTVPASAEVGEAD.

Residues 1–45 (MPLPQPLLGGASPAPARAASSFLHPLLHTRHRVSTAPAAASSFVP) constitute a chloroplast transit peptide. Positions 52–181 (ANDAMLLRRA…ALRNEGIQVD (130 aa)) constitute a CMP/dCMP-type deaminase domain.

This sequence in the C-terminal section; belongs to the YbiA family.

The protein localises to the plastid. It is found in the chloroplast. It carries out the reaction 5-amino-6-(5-phospho-D-ribitylamino)uracil + NADP(+) = 5-amino-6-(5-phospho-D-ribosylamino)uracil + NADPH + H(+). The catalysed reaction is 2,5-diamino-6-hydroxy-4-(5-phosphoribosylamino)-pyrimidine + H2O = 2,5,6-triamino-4-hydroxypyrimidine + D-ribose 5-phosphate. It catalyses the reaction 5-amino-6-(5-phospho-D-ribosylamino)uracil + H2O = 5,6-diaminouracil + D-ribose 5-phosphate. Its pathway is cofactor biosynthesis; riboflavin biosynthesis; 5-amino-6-(D-ribitylamino)uracil from GTP: step 3/4. Its function is as follows. Pyrimidine reductase involved in the riboflavin biosynthesis pathway. Also has a non-functional N-terminal deaminase domain that lacks the catalytically essential zinc-binding residues. 39% activity when NADH replaces NADPH. No evidence for a phosphatase activity conferred by the N-terminal domain. Catalyzes the hydrolysis of the N-glycosidic bond in the first two intermediates of riboflavin biosynthesis, which are highly reactive metabolites, yielding relatively innocuous products. Thus, can divert a surplus of harmful intermediates into relatively harmless products and pre-empt the damage these intermediates would otherwise do. Has no activity against GTP, nucleoside monophosphates or ADP-ribose. The polypeptide is Riboflavin biosynthesis protein PYRR, chloroplastic (PYRR) (Zea mays (Maize)).